The primary structure comprises 206 residues: Pyridoxine/pyridoxamine 5'-phosphate oxidase (206 aa).

FMN-binding positions include 53–58 (RMVLLK), 68–69 (YT), lysine 75, and glutamine 97. Substrate is bound at residue lysine 58. Residues tyrosine 115, arginine 119, and serine 123 each coordinate substrate. FMN is bound by residues 132–133 (QS) and tryptophan 177. 183–185 (RLH) provides a ligand contact to substrate. Arginine 187 contributes to the FMN binding site.

Belongs to the pyridoxamine 5'-phosphate oxidase family. Homodimer. FMN serves as cofactor.

It carries out the reaction pyridoxamine 5'-phosphate + O2 + H2O = pyridoxal 5'-phosphate + H2O2 + NH4(+). The enzyme catalyses pyridoxine 5'-phosphate + O2 = pyridoxal 5'-phosphate + H2O2. It participates in cofactor metabolism; pyridoxal 5'-phosphate salvage; pyridoxal 5'-phosphate from pyridoxamine 5'-phosphate: step 1/1. It functions in the pathway cofactor metabolism; pyridoxal 5'-phosphate salvage; pyridoxal 5'-phosphate from pyridoxine 5'-phosphate: step 1/1. Functionally, catalyzes the oxidation of either pyridoxine 5'-phosphate (PNP) or pyridoxamine 5'-phosphate (PMP) into pyridoxal 5'-phosphate (PLP). In Allorhizobium ampelinum (strain ATCC BAA-846 / DSM 112012 / S4) (Agrobacterium vitis (strain S4)), this protein is Pyridoxine/pyridoxamine 5'-phosphate oxidase.